Consider the following 59-residue polypeptide: Putative potassium channel toxin Ts24 (59 aa).

A signal peptide spans 1 to 22 (MKAFYGILIIFILISMIHLSQQ). 3 cysteine pairs are disulfide-bonded: C29/C50, C35/C55, and C39/C57.

Belongs to the short scorpion toxin superfamily. Potassium channel inhibitor family. Alpha-KTx 04 subfamily. As to expression, expressed by the venom gland.

The protein resides in the secreted. Functionally, potently blocks Kv1.1/KCNA1 (85%), Kv1.2/KCNA2 (91%), Kv1.3/KCNA3 (89%), Kv1.6/KCNA6 (94%), and Shaker (97%). The protein is Putative potassium channel toxin Ts24 of Tityus serrulatus (Brazilian scorpion).